An 84-amino-acid polypeptide reads, in one-letter code: Small ribosomal subunit protein uS17 (84 aa).

The protein belongs to the universal ribosomal protein uS17 family. As to quaternary structure, part of the 30S ribosomal subunit.

Functionally, one of the primary rRNA binding proteins, it binds specifically to the 5'-end of 16S ribosomal RNA. The sequence is that of Small ribosomal subunit protein uS17 from Vibrio vulnificus (strain CMCP6).